A 213-amino-acid polypeptide reads, in one-letter code: Thiamine-phosphate synthase (213 aa).

Residues 38-42 (QLREK) and Asn-73 each bind 4-amino-2-methyl-5-(diphosphooxymethyl)pyrimidine. The Mg(2+) site is built by Asp-74 and Asp-93. Residue Ser-111 participates in 4-amino-2-methyl-5-(diphosphooxymethyl)pyrimidine binding. A 2-[(2R,5Z)-2-carboxy-4-methylthiazol-5(2H)-ylidene]ethyl phosphate-binding site is contributed by 137–139 (TTS). Lys-140 contacts 4-amino-2-methyl-5-(diphosphooxymethyl)pyrimidine. Residues Gly-169 and 189–190 (IS) contribute to the 2-[(2R,5Z)-2-carboxy-4-methylthiazol-5(2H)-ylidene]ethyl phosphate site.

The protein belongs to the thiamine-phosphate synthase family. Mg(2+) is required as a cofactor.

The catalysed reaction is 2-[(2R,5Z)-2-carboxy-4-methylthiazol-5(2H)-ylidene]ethyl phosphate + 4-amino-2-methyl-5-(diphosphooxymethyl)pyrimidine + 2 H(+) = thiamine phosphate + CO2 + diphosphate. The enzyme catalyses 2-(2-carboxy-4-methylthiazol-5-yl)ethyl phosphate + 4-amino-2-methyl-5-(diphosphooxymethyl)pyrimidine + 2 H(+) = thiamine phosphate + CO2 + diphosphate. It catalyses the reaction 4-methyl-5-(2-phosphooxyethyl)-thiazole + 4-amino-2-methyl-5-(diphosphooxymethyl)pyrimidine + H(+) = thiamine phosphate + diphosphate. The protein operates within cofactor biosynthesis; thiamine diphosphate biosynthesis; thiamine phosphate from 4-amino-2-methyl-5-diphosphomethylpyrimidine and 4-methyl-5-(2-phosphoethyl)-thiazole: step 1/1. Its function is as follows. Condenses 4-methyl-5-(beta-hydroxyethyl)thiazole monophosphate (THZ-P) and 2-methyl-4-amino-5-hydroxymethyl pyrimidine pyrophosphate (HMP-PP) to form thiamine monophosphate (TMP). In Lysinibacillus sphaericus (strain C3-41), this protein is Thiamine-phosphate synthase.